We begin with the raw amino-acid sequence, 204 residues long: uncharacterized protein (204 aa).

Disordered regions lie at residues 1–37 (MRAL…GSVS) and 159–204 (GYRP…DGEL). The segment covering 28-37 (GRGPRAGSVS) has biased composition (low complexity). The WGR domain maps to 88 to 175 (PYRLYVERLD…LPKEKWPAEA (88 aa)). Composition is skewed to basic and acidic residues over residues 166–179 (LPKE…EHES) and 188–204 (PEGH…DGEL).

This is an uncharacterized protein from Sinorhizobium fredii (strain NBRC 101917 / NGR234).